The sequence spans 138 residues: Acidic phospholipase A2 PL1 (138 aa).

A signal peptide spans 1–16 (MRALWIVAVCLIGAEG). 7 cysteine pairs are disulfide-bonded: cysteine 42–cysteine 131, cysteine 44–cysteine 60, cysteine 59–cysteine 111, cysteine 65–cysteine 138, cysteine 66–cysteine 104, cysteine 73–cysteine 97, and cysteine 91–cysteine 102. Residues tyrosine 43, glycine 45, and glycine 47 each contribute to the Ca(2+) site. Histidine 63 is an active-site residue. Residue aspartate 64 participates in Ca(2+) binding. Aspartate 105 is an active-site residue.

This sequence belongs to the phospholipase A2 family. Group II subfamily. D49 sub-subfamily. Ca(2+) is required as a cofactor. In terms of tissue distribution, expressed by the venom gland.

The protein resides in the secreted. The enzyme catalyses a 1,2-diacyl-sn-glycero-3-phosphocholine + H2O = a 1-acyl-sn-glycero-3-phosphocholine + a fatty acid + H(+). PLA2 catalyzes the calcium-dependent hydrolysis of the 2-acyl groups in 3-sn-phosphoglycerides. In Vipera renardi (Steppe viper), this protein is Acidic phospholipase A2 PL1.